Consider the following 452-residue polypeptide: Putative purine permease CPE0397 (452 aa).

12 consecutive transmembrane segments (helical) span residues 34–54 (IFAA…SLGF), 58–78 (VTTA…IIQA), 83–103 (KVGA…SPAI), 108–128 (VLGL…EVIL), 138–158 (FFPP…LLPV), 172–192 (YASL…LLLN), 201–221 (SASI…LGLV), 250–270 (MAFI…LKAI), 326–346 (AVMA…AAII), 348–368 (GIPN…VAAA), 383–403 (LLII…PDVI), and 412–432 (MIFS…NAVL).

This sequence belongs to the nucleobase:cation symporter-2 (NCS2) (TC 2.A.40) family.

The protein resides in the cell membrane. The polypeptide is Putative purine permease CPE0397 (cpx) (Clostridium perfringens (strain 13 / Type A)).